The following is a 165-amino-acid chain: Transcriptional repressor NrdR (165 aa).

A zinc finger lies at 3–34; sequence CPFCSANDTKVIDSRLVSDGHQVRRRRECLAC. An ATP-cone domain is found at 49 to 139; sequence PRIIKRDGSR…VYLSFEDISE (91 aa).

It belongs to the NrdR family. Requires Zn(2+) as cofactor.

Functionally, negatively regulates transcription of bacterial ribonucleotide reductase nrd genes and operons by binding to NrdR-boxes. The polypeptide is Transcriptional repressor NrdR (Colwellia psychrerythraea (strain 34H / ATCC BAA-681) (Vibrio psychroerythus)).